The chain runs to 170 residues: Neurotensin/neuromedin N (170 aa).

Positions 1 to 23 (MMAGMKIQLVCMLLLAFSSWSLC) are cleaved as a signal peptide. Glutamine 151 bears the Pyrrolidone carboxylic acid mark.

This sequence belongs to the neurotensin family. As to quaternary structure, interacts with NTSR1. Interacts with SORT1. Interacts with SORL1. Neurotensin is cleaved and degraded by Angiotensin-converting enzyme (ACE) and neprilysin (MME).

It is found in the secreted. Its subcellular location is the cytoplasmic vesicle. The protein localises to the secretory vesicle. Neurotensin may play an endocrine or paracrine role in the regulation of fat metabolism. It causes contraction of smooth muscle. In Homo sapiens (Human), this protein is Neurotensin/neuromedin N (NTS).